A 324-amino-acid chain; its full sequence is Ribosomal RNA small subunit methyltransferase H (324 aa).

Residues 35 to 37 (GGH), Asp55, Phe85, Asp103, and Gln110 contribute to the S-adenosyl-L-methionine site.

It belongs to the methyltransferase superfamily. RsmH family.

It localises to the cytoplasm. It carries out the reaction cytidine(1402) in 16S rRNA + S-adenosyl-L-methionine = N(4)-methylcytidine(1402) in 16S rRNA + S-adenosyl-L-homocysteine + H(+). Its function is as follows. Specifically methylates the N4 position of cytidine in position 1402 (C1402) of 16S rRNA. In Solidesulfovibrio magneticus (strain ATCC 700980 / DSM 13731 / RS-1) (Desulfovibrio magneticus), this protein is Ribosomal RNA small subunit methyltransferase H.